Reading from the N-terminus, the 519-residue chain is F-box-like/WD repeat-containing protein TBL1XR1-A (519 aa).

The 33-residue stretch at 4–36 (SSDEVNFLVYRYLQESGFSHSAFTFGIESHISQ) folds into the LisH domain. One can recognise an F-box-like domain in the interval 41–86 (GALAPPAALISIIQKGLQYVEAEVSINEDGTLFDGRPIESLSLIDA). The segment covering 115-139 (AAAAAATPNNQQPPAKNGENTANGE) has biased composition (low complexity). A disordered region spans residues 115 to 147 (AAAAAATPNNQQPPAKNGENTANGEENGGHALA). WD repeat units follow at residues 172–211 (GHESEVFICAWNPVSDLLASGSGDSTARIWNLSENSTSGS), 228–267 (PSNKDVTSLDWNSEGTLLATGSYDGFARIWTKDGNLASTL), 269–308 (QHKGPIFALKWNKKGNFILSAGVDKTTIIWDAHTGEAKQQ), 311–349 (FHSAPALDVDWQSNNTFASCSTDMCIHVCKLGQDRPIKT), 352–391 (GHTNEVNAIKWDPTGNLLASCSDDMTLKIWSMKHDTCVHD), 394–442 (AHNK…CIHT), 445–484 (KHQEPVYSVAFSPDGRYLASGSFDKCVHIWNTQTGALVHS), and 486–519 (RGTGGIFEVCWNAAGDKVGASASDGSVCVLDLRK).

It belongs to the WD repeat EBI family. Interacts with heterodimers of rxra and thrb, and this interaction is abrogated by thyroid hormone binding to thrb. Interacts with ncor1.

It is found in the nucleus. F-box-like protein which acts as an integral component of the N-CoR transcriptional corepressor complex. Probably regulates transcription activation mediated by nuclear receptors. May mediate the recruitment of the 19S proteasome complex, leading to the subsequent proteasomal degradation of the N-CoR complex, thereby allowing cofactor exchange and transcription activation. The polypeptide is F-box-like/WD repeat-containing protein TBL1XR1-A (tbl1xr1-a) (Xenopus laevis (African clawed frog)).